The chain runs to 207 residues: U1 small nuclear ribonucleoprotein C (207 aa).

Residues 4–36 (YYCDYCDTYLTHDSPSVRKQHNAGYKHKANVRI) form a Matrin-type zinc finger. Composition is skewed to pro residues over residues 105-115 (PPQGYMPPPGV) and 122-131 (PGAPLPPPPQ). Residues 105-207 (PPQGYMPPPG…PSAESPESNE (103 aa)) form a disordered region. Positions 132–144 (NGILRPPGMAPIP) are enriched in low complexity. Residues 162 to 183 (GPPPNYNGLPPPPPYHTNPAAP) show a composition bias toward pro residues. A compositionally biased stretch (low complexity) spans 184–207 (PSGNFNNPNLNNPNPSAESPESNE).

This sequence belongs to the U1 small nuclear ribonucleoprotein C family. As to quaternary structure, U1 snRNP is composed of the 7 core Sm proteins B/B', D1, D2, D3, E, F and G that assemble in a heptameric protein ring on the Sm site of the small nuclear RNA to form the core snRNP, and at least 3 U1 snRNP-specific proteins U1-70K, U1-A and U1-C. U1-C interacts with U1 snRNA and the 5' splice-site region of the pre-mRNA.

The protein resides in the nucleus. Its function is as follows. Component of the spliceosomal U1 snRNP, which is essential for recognition of the pre-mRNA 5' splice-site and the subsequent assembly of the spliceosome. U1-C is directly involved in initial 5' splice-site recognition for both constitutive and regulated alternative splicing. The interaction with the 5' splice-site seems to precede base-pairing between the pre-mRNA and the U1 snRNA. Stimulates commitment or early (E) complex formation by stabilizing the base pairing of the 5' end of the U1 snRNA and the 5' splice-site region. This chain is U1 small nuclear ribonucleoprotein C, found in Arabidopsis thaliana (Mouse-ear cress).